Consider the following 499-residue polypeptide: U4/U6 small nuclear ribonucleoprotein Prp31 (499 aa).

The segment at 1 to 37 is disordered; that stretch reads MSLADELLADLEEAAEEEEGGSYGEEEEEPAIEDVQE. The segment covering 7 to 37 has biased composition (acidic residues); that stretch reads LLADLEEAAEEEEGGSYGEEEEEPAIEDVQE. Coiled-coil stretches lie at residues 85-120 and 181-215; these read EAAP…KYSK and EEEL…MSFI. Positions 215-333 constitute a Nop domain; that stretch reads IAPNLSIIIG…IERKFDKWQE (119 aa). Positions 334–357 are disordered; that stretch reads PPPVKQVKPLPAPLDGQRKKRGGR. The short motif at 351–364 is the Nuclear localization signal (NLS) element; sequence RKKRGGRRYRKMKE. Phosphoserine is present on residues serine 379, serine 395, and serine 432. At lysine 438 the chain carries N6-acetyllysine. Phosphoserine is present on serine 439. A Phosphothreonine modification is found at threonine 440. A Phosphoserine modification is found at serine 450. The residue at position 455 (threonine 455) is a Phosphothreonine. Glycyl lysine isopeptide (Lys-Gly) (interchain with G-Cter in SUMO2) cross-links involve residues lysine 471 and lysine 478.

The protein belongs to the PRP31 family. As to quaternary structure, identified in the spliceosome B complex. Component of the U4/U6-U5 tri-snRNP complex composed of the U4, U6 and U5 snRNAs and at least PRPF3, PRPF4, PRPF6, PRPF8, PRPF31, SNRNP200, TXNL4A, SNRNP40, DDX23, CD2BP2, PPIH, SNU13, EFTUD2, SART1 and USP39. Interacts with a complex formed by SNU13 and U4 snRNA, but not with SNU13 or U4 snRNA alone. The complex formed by SNU13 and PRPF31 also binds U4atac snRNA, a characteristic component of specific, less abundant spliceosomal complexes. Interacts with PRPF6/U5 snRNP-associated 102 kDa protein. Component of some MLL1/MLL complex, at least composed of the core components KMT2A/MLL1, ASH2L, HCFC1/HCF1, WDR5 and RBBP5, as well as the facultative components BACC1, CHD8, E2F6, HSP70, INO80C, KANSL1, LAS1L, MAX, MCRS1, MGA, KAT8/MOF, PELP1, PHF20, PRP31, RING2, RUVB1/TIP49A, RUVB2/TIP49B, SENP3, TAF1, TAF4, TAF6, TAF7, TAF9 and TEX10. Interacts (via its NLS) with CTNNBL1. Interacts with USH1G. Post-translationally, phosphorylated by PRP4K during spliceosome assembly. As to expression, ubiquitously expressed.

It is found in the nucleus. Its subcellular location is the nucleus speckle. The protein localises to the cajal body. Its function is as follows. Involved in pre-mRNA splicing as component of the spliceosome. Required for the assembly of the U4/U5/U6 tri-snRNP complex, one of the building blocks of the spliceosome. In Homo sapiens (Human), this protein is U4/U6 small nuclear ribonucleoprotein Prp31.